Here is a 587-residue protein sequence, read N- to C-terminus: Aspartate--tRNA ligase (587 aa).

Glutamate 174 is a binding site for L-aspartate. Positions glutamine 198–lysine 201 are aspartate. An L-aspartate-binding site is contributed by arginine 220. ATP-binding positions include arginine 220 to glutamate 222 and glutamine 229. Position 443 (histidine 443) interacts with L-aspartate. Glutamate 477 contributes to the ATP binding site. Arginine 484 is a binding site for L-aspartate. Glycine 529–arginine 532 contributes to the ATP binding site.

Belongs to the class-II aminoacyl-tRNA synthetase family. Type 1 subfamily. In terms of assembly, homodimer.

The protein resides in the cytoplasm. The catalysed reaction is tRNA(Asp) + L-aspartate + ATP = L-aspartyl-tRNA(Asp) + AMP + diphosphate. Its function is as follows. Catalyzes the attachment of L-aspartate to tRNA(Asp) in a two-step reaction: L-aspartate is first activated by ATP to form Asp-AMP and then transferred to the acceptor end of tRNA(Asp). The protein is Aspartate--tRNA ligase of Streptococcus pneumoniae serotype 4 (strain ATCC BAA-334 / TIGR4).